A 264-amino-acid polypeptide reads, in one-letter code: Transcription initiation factor TFIID subunit 9 (264 aa).

Lys5 carries the N6-acetyllysine modification. Residues Ser149, Ser152, Ser155, and Ser158 each carry the phosphoserine modification. Residues 150-174 (VGSVSSRPSTPTLGTPTPQAMSVST) form a disordered region. The segment covering 151–174 (GSVSSRPSTPTLGTPTPQAMSVST) has biased composition (polar residues). 4 positions are modified to phosphothreonine: Thr159, Thr161, Thr164, and Thr178. Residues Ser181 and Ser196 each carry the phosphoserine modification. Residues 233–264 (QNTANESANALKRKREEEDDDDDDDDDDYDNL) are disordered. Positions 249–264 (EEDDDDDDDDDDYDNL) are enriched in acidic residues.

This sequence belongs to the TAF9 family. In terms of assembly, component of the TFIID basal transcription factor complex, composed of TATA-box-binding protein TBP, and a number of TBP-associated factors (TAFs), including TAF1, TAF2, TAF3, TAF4, TAF5, TAF6, TAF7, TAF8, TAF9, TAF10, TAF11, TAF12 and TAF13. Component of the TATA-binding protein-free TAF complex (TFTC), the PCAF histone acetylase complex and the STAGA transcription coactivator-HAT complex. The PCAF complex consists at least of TADA2L/ADA2, SUPT3H/SPT3, TADA3L/ADA3, TAF5L/PAF65-beta, TAF6L/PAF65-alpha, TAF10/TAFII30, TAF12/TAFII20, TAF9/TAFII31 and TRRAP. The STAGA transcription coactivator-HAT complex consists at least of SUPT3H, GCN5L2, SUPT7L, TAF5L, TAF6L, TADA3L, TAD1L, TAF10, TAF12, TRRAP and TAF9. Binds N-terminal domain of p53/TP53 which is essential for transcription. Component of some MLL1/MLL complex, at least composed of the core components KMT2A/MLL1, ASH2L, HCFC1/HCF1, WDR5 and RBBP5, as well as the facultative components BACC1, CHD8, E2F6, HSP70, INO80C, KANSL1, LAS1L, MAX, MCRS1, MGA, MYST1/MOF, PELP1, PHF20, PRP31, RING2, RUVB1/TIP49A, RUVB2/TIP49B, SENP3, TAF1, TAF4, TAF6, TAF7, TAF9 and TEX10. Binds TFIIB and the Herpes simplex virus activator VP16. Forms a heterodimer with TAF6 in a complex with the TAF4B-TAF12 heterodimer. Also interacts with TAF5. Binds directly DNA. Increased DNA binding when complexed with TAF6.

The protein resides in the nucleus. Functionally, the TFIID basal transcription factor complex plays a major role in the initiation of RNA polymerase II (Pol II)-dependent transcription. TFIID recognizes and binds promoters with or without a TATA box via its subunit TBP, a TATA-box-binding protein, and promotes assembly of the pre-initiation complex (PIC). The TFIID complex consists of TBP and TBP-associated factors (TAFs), including TAF1, TAF2, TAF3, TAF4, TAF5, TAF6, TAF7, TAF8, TAF9, TAF10, TAF11, TAF12 and TAF13. TAF9 is also a component of the TBP-free TAFII complex (TFTC), the PCAF histone acetylase complex and the STAGA transcription coactivator-HAT complex. TAF9 and its paralog TAF9B are involved in transcriptional activation as well as repression of distinct but overlapping sets of genes. Essential for cell viability. May have a role in gene regulation associated with apoptosis. The protein is Transcription initiation factor TFIID subunit 9 of Rattus norvegicus (Rat).